The chain runs to 494 residues: Argininosuccinate synthase, chloroplastic (494 aa).

A chloroplast-targeting transit peptide spans 1-73 (MAEISATSFP…SRSCKNQAIR (73 aa)). Ala74 carries the N-acetylalanine modification. ATP is bound by residues 102-110 (AYSGGLDTS) and Ala129. The L-citrulline site is built by Tyr181 and Ser186. Residue Gly211 participates in ATP binding. The L-aspartate site is built by Thr213, Asn217, and Asp218. L-citrulline is bound at residue Asn217. L-citrulline contacts are provided by Arg221, Ser270, Ser279, Glu355, and Tyr367.

Belongs to the argininosuccinate synthase family. Type 1 subfamily. In terms of assembly, homotetramer.

It is found in the plastid. The protein localises to the chloroplast. It carries out the reaction L-citrulline + L-aspartate + ATP = 2-(N(omega)-L-arginino)succinate + AMP + diphosphate + H(+). It functions in the pathway amino-acid biosynthesis; L-arginine biosynthesis; L-arginine from L-ornithine and carbamoyl phosphate: step 2/3. This Arabidopsis thaliana (Mouse-ear cress) protein is Argininosuccinate synthase, chloroplastic.